The primary structure comprises 89 residues: Small ribosomal subunit protein uS15 (89 aa).

Belongs to the universal ribosomal protein uS15 family. In terms of assembly, part of the 30S ribosomal subunit. Forms a bridge to the 50S subunit in the 70S ribosome, contacting the 23S rRNA.

Its function is as follows. One of the primary rRNA binding proteins, it binds directly to 16S rRNA where it helps nucleate assembly of the platform of the 30S subunit by binding and bridging several RNA helices of the 16S rRNA. In terms of biological role, forms an intersubunit bridge (bridge B4) with the 23S rRNA of the 50S subunit in the ribosome. The chain is Small ribosomal subunit protein uS15 from Pediococcus pentosaceus (strain ATCC 25745 / CCUG 21536 / LMG 10740 / 183-1w).